A 191-amino-acid polypeptide reads, in one-letter code: UPF0312 protein Pmen_0419 (191 aa).

Residues Met1–Ala22 form the signal peptide.

The protein belongs to the UPF0312 family. Type 1 subfamily.

It localises to the periplasm. This chain is UPF0312 protein Pmen_0419, found in Ectopseudomonas mendocina (strain ymp) (Pseudomonas mendocina).